Consider the following 571-residue polypeptide: Phosphoenolpyruvate-protein phosphotransferase (571 aa).

H203 (tele-phosphohistidine intermediate) is an active-site residue. R306 and R342 together coordinate phosphoenolpyruvate. The Mg(2+) site is built by E429 and D453. Phosphoenolpyruvate contacts are provided by residues 452-453 (ND) and R463. Catalysis depends on C500, which acts as the Proton donor.

This sequence belongs to the PEP-utilizing enzyme family. In terms of assembly, homodimer. Mg(2+) serves as cofactor.

It is found in the cytoplasm. It carries out the reaction L-histidyl-[protein] + phosphoenolpyruvate = N(pros)-phospho-L-histidyl-[protein] + pyruvate. General (non sugar-specific) component of the phosphoenolpyruvate-dependent sugar phosphotransferase system (sugar PTS). This major carbohydrate active-transport system catalyzes the phosphorylation of incoming sugar substrates concomitantly with their translocation across the cell membrane. Enzyme I transfers the phosphoryl group from phosphoenolpyruvate (PEP) to the phosphoryl carrier protein (HPr). This is Phosphoenolpyruvate-protein phosphotransferase (ptsI) from Chlamydia pneumoniae (Chlamydophila pneumoniae).